The following is a 441-amino-acid chain: Mannose-6-phosphate isomerase 2 (441 aa).

Positions 131, 133, 158, and 296 each coordinate Zn(2+). Residue arginine 315 is part of the active site.

The protein belongs to the mannose-6-phosphate isomerase type 1 family. It depends on Zn(2+) as a cofactor. In terms of tissue distribution, not expressed in any organs under light (at protein level).

The catalysed reaction is D-mannose 6-phosphate = D-fructose 6-phosphate. It functions in the pathway nucleotide-sugar biosynthesis; GDP-alpha-D-mannose biosynthesis; alpha-D-mannose 1-phosphate from D-fructose 6-phosphate: step 1/2. Its activity is regulated as follows. Inhibited by EDTA, Zn(2+), Cd(2+), DTT, p-chloromercuribenzoate and L-ascorbic acid (AsA). Involved in the synthesis of the GDP-mannose and dolichol-phosphate-mannose required for a number of critical mannosyl transfer reactions. This chain is Mannose-6-phosphate isomerase 2 (PMI2), found in Arabidopsis thaliana (Mouse-ear cress).